We begin with the raw amino-acid sequence, 490 residues long: Probable cytochrome P450 518B1 (490 aa).

The helical transmembrane segment at 2 to 22 threads the bilayer; that stretch reads LTNIIILIILYLFYDFCYKNF. Heme is bound at residue Cys437.

It belongs to the cytochrome P450 family. The cofactor is heme.

The protein localises to the membrane. In Dictyostelium discoideum (Social amoeba), this protein is Probable cytochrome P450 518B1 (cyp518B1).